A 546-amino-acid polypeptide reads, in one-letter code: 5'-nucleotidase domain-containing protein 3 (546 aa).

The active-site Nucleophile is Asp100. Residues Asp100 and Asp102 each coordinate Mg(2+). Catalysis depends on Asp102, which acts as the Proton donor. 249–257 (KDSIRDVHI) is a substrate binding site. Asp387 is a binding site for Mg(2+).

It belongs to the 5'(3')-deoxyribonucleotidase family. Requires Mg(2+) as cofactor.

The sequence is that of 5'-nucleotidase domain-containing protein 3 (Nt5dc3) from Mus musculus (Mouse).